A 526-amino-acid chain; its full sequence is Peptide chain release factor 3 (526 aa).

Residues N9–Q277 enclose the tr-type G domain. GTP is bound by residues S18 to T25, D86 to H90, and N140 to D143.

Belongs to the TRAFAC class translation factor GTPase superfamily. Classic translation factor GTPase family. PrfC subfamily.

It is found in the cytoplasm. In terms of biological role, increases the formation of ribosomal termination complexes and stimulates activities of RF-1 and RF-2. It binds guanine nucleotides and has strong preference for UGA stop codons. It may interact directly with the ribosome. The stimulation of RF-1 and RF-2 is significantly reduced by GTP and GDP, but not by GMP. The protein is Peptide chain release factor 3 of Legionella pneumophila (strain Paris).